A 221-amino-acid chain; its full sequence is uncharacterized protein (221 aa).

Residues Asp-20–Thr-63 form the CUE domain. The interval Glu-131 to Lys-194 is disordered. Residues Lys-156–Asn-166 show a composition bias toward low complexity. Residues Lys-169–Pro-183 show a composition bias toward basic and acidic residues.

This is an uncharacterized protein from Caenorhabditis elegans.